The primary structure comprises 218 residues: MSDNNQLQQIAHLRREYTKGGLRRRDLPAEPLTLFERWLGQACDARLADPTAMVVATVDDKGQPYQRIVLLKHYDEKGLVFYTNLGSRKAHQIEHNPRISLLFPWHMLERQVMVTGKAERLSTLEVVRYFHSRPRDSQIGAWVSKQSSRISARGILESKFLELKQKFQQGEVPLPSFWGGFRVSIEQMEFWQGGEHRLHDRFLYQRDDGAWKIDRLAP.

Substrate is bound by residues arginine 14–tyrosine 17 and lysine 72. FMN-binding positions include arginine 67 to lysine 72, tyrosine 82 to threonine 83, arginine 88, lysine 89, and glutamine 111. 3 residues coordinate substrate: tyrosine 129, arginine 133, and serine 137. FMN-binding positions include glutamine 146–serine 147 and tryptophan 191. Arginine 197 to histidine 199 contributes to the substrate binding site. Arginine 201 lines the FMN pocket.

Belongs to the pyridoxamine 5'-phosphate oxidase family. As to quaternary structure, homodimer. It depends on FMN as a cofactor.

The catalysed reaction is pyridoxamine 5'-phosphate + O2 + H2O = pyridoxal 5'-phosphate + H2O2 + NH4(+). It catalyses the reaction pyridoxine 5'-phosphate + O2 = pyridoxal 5'-phosphate + H2O2. Its pathway is cofactor metabolism; pyridoxal 5'-phosphate salvage; pyridoxal 5'-phosphate from pyridoxamine 5'-phosphate: step 1/1. It functions in the pathway cofactor metabolism; pyridoxal 5'-phosphate salvage; pyridoxal 5'-phosphate from pyridoxine 5'-phosphate: step 1/1. In terms of biological role, catalyzes the oxidation of either pyridoxine 5'-phosphate (PNP) or pyridoxamine 5'-phosphate (PMP) into pyridoxal 5'-phosphate (PLP). The chain is Pyridoxine/pyridoxamine 5'-phosphate oxidase from Salmonella typhi.